The chain runs to 431 residues: Cleavage stimulation factor subunit 1 (431 aa).

Residues 14–35 form a hydrophobic region; it reads LYKLIISQLLYDGYISIANGLI. 6 WD repeats span residues 106–145, 171–210, 215–254, 260–301, 303–343, and 395–430; these read SHKG…AKSA, DHVD…AKRA, QEAE…CFVS, QHTD…TTFE, AHDG…TLVR, and GHNN…RSTT.

Homodimer. The CSTF complex is composed of CSTF1 (50 kDa subunit), CSTF2 (64 kDa subunit) and CSTF3 (77 kDa subunit). Interacts (via repeats WD) directly with CSTF3. Interacts (via repeat WD6) with BARD1. Interacts with ERCC6. In terms of processing, the N-terminus is blocked.

The protein resides in the nucleus. One of the multiple factors required for polyadenylation and 3'-end cleavage of mammalian pre-mRNAs. May be responsible for the interaction of CSTF with other factors to form a stable complex on the pre-mRNA. In Homo sapiens (Human), this protein is Cleavage stimulation factor subunit 1 (CSTF1).